Here is a 530-residue protein sequence, read N- to C-terminus: UDP-glucuronosyltransferase 1A10 (530 aa).

The first 25 residues, Met1–Ala25, serve as a signal peptide directing secretion. N-linked (GlcNAc...) asparagine glycosylation is found at Asn71, Asn292, and Asn344. The chain crosses the membrane as a helical span at residues Val488–Phe504.

Belongs to the UDP-glycosyltransferase family. As to quaternary structure, homodimer. Homooligomer. Interacts with UGT1A1, UGT1A3, UGT1A4, UGT1A6, UGT1A7, UGT1A8 and UGT1A9 to form heterodimers. Isoform 1 interacts with isoform 2/i2 suggesting that oligomerization is involved in negative regulation of transferase activity by isoform 2. Isoform 1 also interacts with respective i2 isoforms of UGT1A1, UGT1A3, UGT1A4, UGT1A6, UGT1A7, UGT1A8 and UGT1A9. As to expression, liver and colon. Isoform 1 and isoform 2 are expressed in colon, esophagus and small intestine; isoform 2 but not isoform 1 is expressed in liver or kidney.

Its subcellular location is the endoplasmic reticulum membrane. It carries out the reaction glucuronate acceptor + UDP-alpha-D-glucuronate = acceptor beta-D-glucuronoside + UDP + H(+). The enzyme catalyses 17beta-estradiol + UDP-alpha-D-glucuronate = 17beta-estradiol 3-O-(beta-D-glucuronate) + UDP + H(+). It catalyses the reaction 17beta-estradiol + UDP-alpha-D-glucuronate = 17beta-estradiol 17-O-(beta-D-glucuronate) + UDP + H(+). The catalysed reaction is 17alpha-estradiol + UDP-alpha-D-glucuronate = 17alpha-estradiol 3-O-(beta-D-glucuronate) + UDP + H(+). It carries out the reaction 16alpha,17beta-estriol + UDP-alpha-D-glucuronate = 16alpha,17beta-estriol 3-O-(beta-D-glucuronate) + UDP + H(+). The enzyme catalyses 16beta,17beta-estriol + UDP-alpha-D-glucuronate = 16beta,17beta-estriol 3-O-(beta-D-glucuronate) + UDP + H(+). It catalyses the reaction 16alpha,17alpha-estriol + UDP-alpha-D-glucuronate = 16alpha,17alpha-estriol 3-O-(beta-D-glucuronate) + UDP + H(+). The catalysed reaction is 16alpha-hydroxyestrone + UDP-alpha-D-glucuronate = 16alpha-hydroxyestrone 3-O-(beta-D-glucuronate) + UDP + H(+). It carries out the reaction estrone + UDP-alpha-D-glucuronate = estrone 3-O-(beta-D-glucuronate) + UDP + H(+). The enzyme catalyses prunetin + UDP-alpha-D-glucuronate = prunetin-4'-O-beta-D-glucuronide + UDP. It catalyses the reaction (5Z,8Z,11Z,14Z)-eicosatetraenoate + UDP-alpha-D-glucuronate = O-[(5Z),(8Z),(11Z),(14Z)-eicosatetraenoyl]-beta-D-glucuronate + UDP. The catalysed reaction is 15-hydroxy-(5Z,8Z,11Z,13E)-eicosatetraenoate + UDP-alpha-D-glucuronate = 15-O-(beta-D-glucuronosyl)-(5Z,8Z,11Z,14Z)-eicosatetraenoate + UDP + H(+). It carries out the reaction prostaglandin B1 + UDP-alpha-D-glucuronate = 15-O-(beta-D-glucuronosyl)-prostaglandin B1 + UDP + H(+). The enzyme catalyses (E)-ferulate + UDP-alpha-D-glucuronate = (E)-4-O-(beta-D-glucuronosyl)-ferulate + UDP + H(+). It catalyses the reaction (E)-ferulate + UDP-alpha-D-glucuronate = (E)-ferulic acid beta-D-glucuronate ester + UDP. The catalysed reaction is losartan + UDP-alpha-D-glucuronate = losartan-2-N-beta-D-glucuronide + UDP. It carries out the reaction candesartan + UDP-alpha-D-glucuronate = candesartan O-beta-D-glucuronoside + UDP. The enzyme catalyses candesartan + UDP-alpha-D-glucuronate = candesartan-2-N-beta-D-glucuronide + UDP. It catalyses the reaction zolasartan + UDP-alpha-D-glucuronate = zolarsartan-1-N-beta-D-glucuronide + UDP. Functionally, UDP-glucuronosyltransferase (UGT) that catalyzes phase II biotransformation reactions in which lipophilic substrates are conjugated with glucuronic acid to increase the metabolite's water solubility, thereby facilitating excretion into either the urine or bile. Essential for the elimination and detoxification of drugs, xenobiotics and endogenous compounds. Catalyzes the glucuronidation of endogenous estrogen hormones such as estradiol, estrone and estriol. Involved in the glucuronidation of arachidonic acid (AA) and AA-derived eicosanoids including 15-HETE and PGB1. Involved in the glucuronidation of the phytochemical ferulic acid at the phenolic or the carboxylic acid group. Also catalyzes the glucuronidation of the isoflavones genistein, daidzein, glycitein, formononetin, biochanin A and prunetin, which are phytoestrogens with anticancer and cardiovascular properties. Involved in the glucuronidation of the AGTR1 angiotensin receptor antagonist losartan, caderastan and zolarsatan, drugs which can inhibit the effect of angiotensin II. In terms of biological role, lacks UGT glucuronidation activity but acts as a negative regulator of isoform 1. The chain is UDP-glucuronosyltransferase 1A10 from Homo sapiens (Human).